The primary structure comprises 447 residues: MGEPRAGAALDDGSGWTGSEEGSEEGTGGSEGAGGDGGPDAEGVWSPDIEQSFQEALAIYPPCGRRKIILSDEGKMYGRNELIARYIKLRTGKTRTRKQVSSHIQVLARRKSREIQSKLKDQVSKDKAFQTMATMSSAQLISAPSLQAKLGPTGPQASELFQFWSGGSGPPWNVPDVKPFSQTPFTLSLTPPSTDLPGYEPPQALSPLPPPTPSPPAWQARGLGTARLQLVEFSAFVEPPDAVDSYQRHLFVHISQHCPSPGAPPLESVDVRQIYDKFPEKKGGLRELYDRGPPHAFFLVKFWADLNWGPSGEEAGAGGSISSGGFYGVSSQYESLEHMTLTCSSKVCSFGKQVVEKVETERAQLEDGRFVYRLLRSPMCEYLVNFLHKLRQLPERYMMNSVLENFTILQVVTNRDTQELLLCTAYVFEVSTSERGAQHHIYRLVRD.

2 disordered regions span residues 1-46 (MGEP…GVWS) and 183-218 (TPFTLSLTPPSTDLPGYEPPQALSPLPPPTPSPPAW). Low complexity predominate over residues 11–20 (DDGSGWTGSE). The segment covering 25–40 (EGTGGSEGAGGDGGPD) has biased composition (gly residues). Positions 38 to 114 (GPDAEGVWSP…QVLARRKSRE (77 aa)) form a DNA-binding region, TEA. The segment at 172–447 (WNVPDVKPFS…QHHIYRLVRD (276 aa)) is transcriptional activation. The segment covering 183–206 (TPFTLSLTPPSTDLPGYEPPQALS) has biased composition (low complexity). Pro residues predominate over residues 207–216 (PLPPPTPSPP).

Interacts with YAP1 and WWTR1/TAZ.

It localises to the nucleus. In terms of biological role, transcription factor which plays a key role in the Hippo signaling pathway, a pathway involved in organ size control and tumor suppression by restricting proliferation and promoting apoptosis. The core of this pathway is composed of a kinase cascade wherein MST1/MST2, in complex with its regulatory protein SAV1, phosphorylates and activates LATS1/2 in complex with its regulatory protein MOB1, which in turn phosphorylates and inactivates YAP1 oncoprotein and WWTR1/TAZ. Acts by mediating gene expression of YAP1 and WWTR1/TAZ, thereby regulating cell proliferation, migration and epithelial mesenchymal transition (EMT) induction. Binds to the SPH and GT-IIC 'enhansons' (5'-GTGGAATGT-3'). May be involved in the gene regulation of neural development. Binds to the M-CAT motif. This Homo sapiens (Human) protein is Transcriptional enhancer factor TEF-4 (TEAD2).